The chain runs to 116 residues: Iron-sulfur cluster insertion protein ErpA (116 aa).

Iron-sulfur cluster-binding residues include C44, C108, and C110.

Belongs to the HesB/IscA family. In terms of assembly, homodimer. Iron-sulfur cluster is required as a cofactor.

In terms of biological role, required for insertion of 4Fe-4S clusters for at least IspG. In Pseudomonas aeruginosa (strain LESB58), this protein is Iron-sulfur cluster insertion protein ErpA.